Here is a 24-residue protein sequence, read N- to C-terminus: Brevinin-1La (24 aa).

Cys-18 and Cys-24 are joined by a disulfide.

Expressed by the skin glands.

The protein localises to the secreted. In terms of biological role, antibacterial activity against Gram-positive bacterium S.aureus and Gram-negative bacterium E.coli. This Rana luteiventris (Columbia spotted frog) protein is Brevinin-1La.